We begin with the raw amino-acid sequence, 474 residues long: Glutamate--tRNA ligase (474 aa).

The short motif at 9-19 is the 'HIGH' region element; that stretch reads PSPTGYLHVGG. Positions 240–244 match the 'KMSKS' region motif; sequence KLSKR. Position 243 (K243) interacts with ATP.

It belongs to the class-I aminoacyl-tRNA synthetase family. Glutamate--tRNA ligase type 1 subfamily. In terms of assembly, monomer.

It is found in the cytoplasm. The catalysed reaction is tRNA(Glu) + L-glutamate + ATP = L-glutamyl-tRNA(Glu) + AMP + diphosphate. In terms of biological role, catalyzes the attachment of glutamate to tRNA(Glu) in a two-step reaction: glutamate is first activated by ATP to form Glu-AMP and then transferred to the acceptor end of tRNA(Glu). The protein is Glutamate--tRNA ligase of Vibrio parahaemolyticus serotype O3:K6 (strain RIMD 2210633).